Consider the following 630-residue polypeptide: Sodium-dependent serotonin transporter (630 aa).

Polar residues-rich tracts occupy residues 1-11 and 42-55; these read METTPLNSQKV and QISN…STSA. The segment at 1–63 is disordered; sequence METTPLNSQK…SAGDEAPHST (63 aa). Residues 1–87 are Cytoplasmic-facing; the sequence is METTPLNSQK…ERETWGKKMD (87 aa). Position 47 is a phosphotyrosine (Tyr47). The chain crosses the membrane as a helical span at residues 88 to 112; the sequence is FLLSVIGYAVDLGNIWRFPYICYQN. Gly94, Ala96, Val97, Asp98, and Asn101 together coordinate Na(+). Asp98 provides a ligand contact to serotonin. Over 113–115 the chain is Extracellular; the sequence is GGG. The chain crosses the membrane as a helical span at residues 116-135; it reads AFLLPYTIMAIFGGIPLFYM. Residues 136 to 160 are Cytoplasmic-facing; it reads ELALGQYHRNGCISIWKKICPIFKG. Tyr142 carries the phosphotyrosine modification. A helical membrane pass occupies residues 161-186; the sequence is IGYAICIIAFYIASYYNTIIAWALYY. Residues 187 to 252 lie on the Extracellular side of the membrane; sequence LISSFTDQLP…KGLQDLGTIS (66 aa). A disulfide bridge connects residues Cys200 and Cys209. N-linked (GlcNAc...) asparagine glycosylation is found at Asn208 and Asn217. Residues 253 to 271 form a helical membrane-spanning segment; sequence WQLALCIMLIFTIIYFSIW. Residues 272–277 are Cytoplasmic-facing; that stretch reads KGVKTS. Thr276 carries the phosphothreonine modification. A helical membrane pass occupies residues 278-297; the sequence is GKVVWVTATFPYIVLSVLLV. Residues 298–324 are Extracellular-facing; it reads RGATLPGAWRGVVFYLKPNWQKLLETG. Residues 325–347 form a helical membrane-spanning segment; the sequence is VWVDAAAQIFFSLGPGFGVLLAF. Residue Ser336 participates in Na(+) binding. At 348 to 360 the chain is on the cytoplasmic side; it reads ASYNKFNNNCYQD. A helical membrane pass occupies residues 361–380; it reads ALVTSVVNCMTSFVSGFVIF. Residue Asn368 coordinates Na(+). The Extracellular segment spans residues 381 to 421; the sequence is TVLGYMAEMRNEDVSEVAKDAGPSLLFITYAEAIANMPAST. Residues 422–443 traverse the membrane as a helical segment; the sequence is FFAIIFFLMLITLGLDSTFAGL. 3 residues coordinate Na(+): Leu434, Asp437, and Ser438. Thr439 contributes to the serotonin binding site. At 444–463 the chain is on the cytoplasmic side; the sequence is EGVITAVLDEFPHIWAKRRE. The chain crosses the membrane as a helical span at residues 464 to 483; it reads WFVLIVVITCILGSLLTLTS. At 484–494 the chain is on the extracellular side; it reads GGAYVVTLLEE. Residues Glu494 and Tyr495 each coordinate serotonin. Residues 495–516 form a helical membrane-spanning segment; sequence YATGPAVLTVALIEAVVVSWFY. Over 517 to 538 the chain is Cytoplasmic; sequence GITQFCSDVKEMLGFSPGWFWR. A helical membrane pass occupies residues 539-558; the sequence is ICWVAISPLFLLFIICSFLM. Positions 556 and 559 each coordinate serotonin. Topologically, residues 559–574 are extracellular; that stretch reads SPPQLRLFQYNYPHWS. Residues 575-595 traverse the membrane as a helical segment; sequence IILGYCIGTSSVICIPIYIIY. Residues 596–630 are Cytoplasmic-facing; the sequence is RLISTPGTLKERIIKSITPETPTEIPCGDIRMNAV. The interaction with RAB4A stretch occupies residues 616–624; the sequence is TPTEIPCGD.

The protein belongs to the sodium:neurotransmitter symporter (SNF) (TC 2.A.22) family. SLC6A4 subfamily. In terms of assembly, monomer or homooligomer. Interacts (via C-terminus) with SCAMP2; the interaction is direct and retains transporter molecules intracellularly. Interacts with filamentous actin and STX1A. Interacts (via the N-terminus) with STX1A (via the H3 domain); this interaction regulates SLC4A6 channel conductance. Interacts with SEC23A, SEC24C and PATJ. Interacts with NOS1; the interaction may diminish the cell surface localization of SERT in the brain and, correspondingly, reduce serotonin reuptake. Interacts with TGFB1I1. Interacts with ITGAV:ITGB3. Interacts (via C-terminus) with ITGB3; this interaction regulates SLC6A4 trafficking. Post-translationally, phosphorylation at Thr-276 increases 5-HT uptake and is required for cGMP-mediated SERT regulation. Expressed in the lung, midbrain and brainstem regions. Expressed in brainstem raphe neurons.

The protein localises to the cell membrane. It is found in the endomembrane system. It localises to the endosome membrane. Its subcellular location is the synapse. The protein resides in the cell junction. The protein localises to the focal adhesion. It is found in the cell projection. It localises to the neuron projection. The enzyme catalyses serotonin(out) + K(+)(in) + Na(+)(out) + H(+)(in) = serotonin(in) + K(+)(out) + Na(+)(in) + H(+)(out). Serotonin transporter that cotransports serotonin with one Na(+) ion in exchange for one K(+) ion and possibly one proton in an overall electroneutral transport cycle. Transports serotonin across the plasma membrane from the extracellular compartment to the cytosol thus limiting serotonin intercellular signaling. Essential for serotonin homeostasis in the central nervous system. In the developing somatosensory cortex, acts in glutamatergic neurons to control serotonin uptake and its trophic functions accounting for proper spatial organization of cortical neurons and elaboration of sensory circuits. In the mature cortex, acts primarily in brainstem raphe neurons to mediate serotonin uptake from the synaptic cleft back into the pre-synaptic terminal thus terminating serotonin signaling at the synapse. Modulates mucosal serotonin levels in the gastrointestinal tract through uptake and clearance of serotonin in enterocytes. Required for enteric neurogenesis and gastrointestinal reflexes. Regulates blood serotonin levels by ensuring rapid high affinity uptake of serotonin from plasma to platelets, where it is further stored in dense granules via vesicular monoamine transporters and then released upon stimulation. Mechanistically, the transport cycle starts with an outward-open conformation having Na1(+) and Cl(-) sites occupied. The binding of a second extracellular Na2(+) ion and serotonin substrate leads to structural changes to outward-occluded to inward-occluded to inward-open, where the Na2(+) ion and serotonin are released into the cytosol. Binding of intracellular K(+) ion induces conformational transitions to inward-occluded to outward-open and completes the cycle by releasing K(+) possibly together with a proton bound to Asp-98 into the extracellular compartment. Na1(+) and Cl(-) ions remain bound throughout the transport cycle. Additionally, displays serotonin-induced channel-like conductance for monovalent cations, mainly Na(+) ions. The channel activity is uncoupled from the transport cycle and may contribute to the membrane resting potential or excitability. The protein is Sodium-dependent serotonin transporter of Mus musculus (Mouse).